We begin with the raw amino-acid sequence, 243 residues long: DNA repair protein RecO (243 aa).

It belongs to the RecO family.

Involved in DNA repair and RecF pathway recombination. The polypeptide is DNA repair protein RecO (Phenylobacterium zucineum (strain HLK1)).